Reading from the N-terminus, the 146-residue chain is Metallothiol transferase FosB (146 aa).

The 117-residue stretch at 4–120 (GINHMTFSVS…DGHLLEVHTG (117 aa)) folds into the VOC domain. Mg(2+) is bound by residues His7, His66, and Glu116. The active-site Proton donor/acceptor is the Glu116.

The protein belongs to the fosfomycin resistance protein family. FosB subfamily. In terms of assembly, homodimer. Mg(2+) is required as a cofactor.

It localises to the cytoplasm. Functionally, metallothiol transferase which confers resistance to fosfomycin by catalyzing the addition of a thiol cofactor to fosfomycin. L-cysteine is probably the physiological thiol donor. The chain is Metallothiol transferase FosB from Shouchella clausii (strain KSM-K16) (Alkalihalobacillus clausii).